The primary structure comprises 285 residues: Transcription initiation factor IIE subunit beta (285 aa).

Composition is skewed to polar residues over residues 1 to 10 (MSSLSDQLSS) and 33 to 44 (TPTAYLNSNDGH). The segment at 1–56 (MSSLSDQLSSFKKKVANQPIYAKPQPRQPASPTPTAYLNSNDGHSSAASSPGSYSL) is disordered. Over residues 45–55 (SSAASSPGSYS) the composition is skewed to low complexity. The segment at residues 67 to 142 (YSQPADSGVG…FTFKPLHNIR (76 aa)) is a DNA-binding region (TFIIE beta). Residues 240–272 (PTSVDPSTVKRAGHNQTPKQKKPKTRRGKITNT) form a disordered region. Over residues 258-268 (KQKKPKTRRGK) the composition is skewed to basic residues.

The protein belongs to the TFIIE beta subunit family. TFIIE is a tetramer of two alpha (tfa1) and two beta (tfa2) subunits. TFIIE associates with RNA polymerase II via the beta subunit.

The protein localises to the nucleus. Functionally, recruits TFIIH to the initiation complex and stimulates the RNA polymerase II C-terminal domain kinase and DNA-dependent ATPase activities of TFIIH. Both TFIIH and TFIIE are required for promoter clearance by RNA polymerase. This is Transcription initiation factor IIE subunit beta (tfa2) from Schizosaccharomyces pombe (strain 972 / ATCC 24843) (Fission yeast).